The following is a 157-amino-acid chain: NudC domain-containing protein 2 (157 aa).

Position 2 is an N-acetylserine (Ser-2). A CS domain is found at Cys-14–Leu-104. The disordered stretch occupies residues Phe-134–Lys-157. At Ser-142 the chain carries Phosphoserine. Residue Tyr-145 is modified to Phosphotyrosine.

In terms of assembly, interacts with LIS1.

The protein resides in the chromosome. Its subcellular location is the centromere. It is found in the kinetochore. The protein localises to the cytoplasm. It localises to the cytoskeleton. The protein resides in the microtubule organizing center. Its subcellular location is the centrosome. It is found in the spindle pole. Its function is as follows. May regulate the LIS1/dynein pathway by stabilizing LIS1 with Hsp90 chaperone. The chain is NudC domain-containing protein 2 (Nudcd2) from Rattus norvegicus (Rat).